The sequence spans 140 residues: MVLLRSLFILQVLVRMGLTYNFSNCNFTSITKIYCNIIFHDLTGDLKGAKFEQIEDCESKPACLLKIEYYTLNPIPGCPSLPDKTFARRTREALNDHCPGYPETERNDGTQEMAQEVQNICLNQTSQILRLWYSFMQSPE.

The first 19 residues, Met1 to Thr19, serve as a signal peptide directing secretion. N-linked (GlcNAc...) asparagine glycans are attached at residues Asn21 and Asn26. Cystine bridges form between Cys25–Cys98, Cys57–Cys63, and Cys78–Cys121. N-linked (GlcNAc...) asparagine glycosylation is present at Asn123.

In terms of assembly, interacts with a receptor composed of CRLF2 and IL7R. Binding of TSLP to CRLF2/TSLPR is a mechanistic prerequisite for recruitment of IL7R to the high-affinity ternary complex.

The protein localises to the secreted. Functionally, cytokine that induces the release of T-cell-attracting chemokines from monocytes and, in particular, enhances the maturation of CD11c(+) dendritic cells. Can induce allergic inflammation by directly activating mast cells. The sequence is that of Thymic stromal lymphopoietin (Tslp) from Mus musculus (Mouse).